A 291-amino-acid polypeptide reads, in one-letter code: Shikimate dehydrogenase (NADP(+)) (291 aa).

Residues 14-16 (SKS) and threonine 61 contribute to the shikimate site. Lysine 65 functions as the Proton acceptor in the catalytic mechanism. Glutamate 77 provides a ligand contact to NADP(+). Positions 86 and 102 each coordinate shikimate. NADP(+) contacts are provided by residues 139–143 (GAGGA), 164–169 (NRTFSR), and leucine 232. Residue tyrosine 234 participates in shikimate binding. Glycine 256 contributes to the NADP(+) binding site.

The protein belongs to the shikimate dehydrogenase family. In terms of assembly, homodimer.

The enzyme catalyses shikimate + NADP(+) = 3-dehydroshikimate + NADPH + H(+). The protein operates within metabolic intermediate biosynthesis; chorismate biosynthesis; chorismate from D-erythrose 4-phosphate and phosphoenolpyruvate: step 4/7. In terms of biological role, involved in the biosynthesis of the chorismate, which leads to the biosynthesis of aromatic amino acids. Catalyzes the reversible NADPH linked reduction of 3-dehydroshikimate (DHSA) to yield shikimate (SA). The sequence is that of Shikimate dehydrogenase (NADP(+)) from Blochmanniella pennsylvanica (strain BPEN).